The following is a 365-amino-acid chain: Chorismate synthase (365 aa).

Positions 48 and 54 each coordinate NADP(+). FMN contacts are provided by residues 125 to 127 (RSS), 238 to 239 (NA), G278, 293 to 297 (KPTSS), and R319.

It belongs to the chorismate synthase family. As to quaternary structure, homotetramer. Requires FMNH2 as cofactor.

It carries out the reaction 5-O-(1-carboxyvinyl)-3-phosphoshikimate = chorismate + phosphate. It participates in metabolic intermediate biosynthesis; chorismate biosynthesis; chorismate from D-erythrose 4-phosphate and phosphoenolpyruvate: step 7/7. In terms of biological role, catalyzes the anti-1,4-elimination of the C-3 phosphate and the C-6 proR hydrogen from 5-enolpyruvylshikimate-3-phosphate (EPSP) to yield chorismate, which is the branch point compound that serves as the starting substrate for the three terminal pathways of aromatic amino acid biosynthesis. This reaction introduces a second double bond into the aromatic ring system. This chain is Chorismate synthase, found in Vesicomyosocius okutanii subsp. Calyptogena okutanii (strain HA).